Reading from the N-terminus, the 500-residue chain is Phenylalanine--tRNA ligase alpha subunit (500 aa).

L-phenylalanine contacts are provided by residues threonine 343, 382–384 (QID), and phenylalanine 423. Glutamate 425 serves as a coordination point for Mg(2+). Phenylalanine 448 is a binding site for L-phenylalanine.

The protein belongs to the class-II aminoacyl-tRNA synthetase family. Phe-tRNA synthetase alpha subunit type 2 subfamily. As to quaternary structure, tetramer of two alpha and two beta subunits. Mg(2+) is required as a cofactor.

It localises to the cytoplasm. The enzyme catalyses tRNA(Phe) + L-phenylalanine + ATP = L-phenylalanyl-tRNA(Phe) + AMP + diphosphate + H(+). This Pyrococcus abyssi (strain GE5 / Orsay) protein is Phenylalanine--tRNA ligase alpha subunit.